Consider the following 426-residue polypeptide: tRNA (guanine(37)-N(1))-methyltransferase (426 aa).

S-adenosyl-L-methionine is bound by residues His-203, Asp-242–Leu-243, Asp-269–Ala-270, and Asn-292. The tract at residues Arg-374–His-426 is disordered. The span at Asn-396–Asn-407 shows a compositional bias: low complexity.

Belongs to the class I-like SAM-binding methyltransferase superfamily. TRM5/TYW2 family. As to quaternary structure, monomer.

The protein resides in the mitochondrion matrix. It localises to the nucleus. It is found in the cytoplasm. The catalysed reaction is guanosine(37) in tRNA + S-adenosyl-L-methionine = N(1)-methylguanosine(37) in tRNA + S-adenosyl-L-homocysteine + H(+). In terms of biological role, specifically methylates the N1 position of guanosine-37 in various cytoplasmic and mitochondrial tRNAs. Methylation is not dependent on the nature of the nucleoside 5' of the target nucleoside. This is the first step in the biosynthesis of wybutosine (yW), a modified base adjacent to the anticodon of tRNAs and required for accurate decoding. The polypeptide is tRNA (guanine(37)-N(1))-methyltransferase (trmt5) (Heterostelium pallidum (strain ATCC 26659 / Pp 5 / PN500) (Cellular slime mold)).